A 59-amino-acid chain; its full sequence is UPF0434 protein VC_1876 (59 aa).

The protein belongs to the UPF0434 family.

The polypeptide is UPF0434 protein VC_1876 (Vibrio cholerae serotype O1 (strain ATCC 39315 / El Tor Inaba N16961)).